The following is a 504-amino-acid chain: Potassium voltage-gated channel subfamily V member 1 (504 aa).

Disordered regions lie at residues 1–22 and 172–193; these read MDLS…GGSL and KKDT…QGPC. The Cytoplasmic portion of the chain corresponds to 1-214; sequence MDLSPRNRPL…EKPGSSTAAR (214 aa). Residues 10-22 are compositionally biased toward low complexity; the sequence is LLESSSLDSGGSL. Positions 172-185 are enriched in basic and acidic residues; sequence KKDTDDQESQHESE. A helical transmembrane segment spans residues 215 to 235; it reads IFGVISIIFVAVSIVNMALMS. Residues 236–242 lie on the Extracellular side of the membrane; that stretch reads AELSWLN. Residues 243–263 form a helical membrane-spanning segment; the sequence is LQLLEILEYVCISWFTGEFIL. At 264-280 the chain is on the cytoplasmic side; that stretch reads RFLCVKDRCRFLRKVPN. Residues 281–301 traverse the membrane as a helical segment; sequence IIDLLAILPFYITLLVESLSG. Residues 302–313 lie on the Extracellular side of the membrane; that stretch reads SHTTQELENVGR. Residues 314-335 traverse the membrane as a helical; Voltage-sensor segment; that stretch reads LVQVLRLLRALRMLKLGRHSTG. At 336-349 the chain is on the cytoplasmic side; it reads LRSLGMTITQCYEE. Residues 350–370 traverse the membrane as a helical segment; that stretch reads VGLLLLFLSVGISIFSTIEYF. The Selectivity filter motif lies at 396 to 401; the sequence is TVGYGD. Residues 411–431 form a helical membrane-spanning segment; the sequence is IVAFMCILSGILVLALPIAII. The Cytoplasmic segment spans residues 432-504; it reads NDRFSACYFT…RSSGGDDFWF (73 aa).

It belongs to the potassium channel family. V (TC 1.A.1.2) subfamily. Kv8.1/KCNV1 sub-subfamily. Heteromultimer with KCNB1 and KCNB2. Interacts with KCNC4 and KCND1. As to expression, detected in brain, throughout layers II, IV and VI of the brain cortex. Detected in cerebellum and hippocampus, in the granule cell layer, Purkinje cell layer, pyramidal cell layer and dentate gyrus. Detected at lower levels in olfactory bulb, amygdala, thalamus, hypothalamus, midbrain and brainstem.

Its subcellular location is the cell membrane. Functionally, potassium channel subunit that does not form functional channels by itself. Modulates KCNB1 and KCNB2 channel activity by shifting the threshold for inactivation to more negative values and by slowing the rate of inactivation. Can down-regulate the channel activity of KCNB1, KCNB2, KCNC4 and KCND1, possibly by trapping them in intracellular membranes. This chain is Potassium voltage-gated channel subfamily V member 1 (KCNV1), found in Mesocricetus auratus (Golden hamster).